Here is a 126-residue protein sequence, read N- to C-terminus: MDAVTVYHGKISRETGEKLLLATGLDGSYLLRDSESVPGVYCLCVLYQGYIYTYRVSQTETGSWSAETAPGVHKRFFRKVKNLISAFQKPDQGIVTPLQYPVEKSSGRGPQAPTGRRDSDICLNAP.

In terms of domain architecture, SH2 spans 6-104; the sequence is VYHGKISRET…VTPLQYPVEK (99 aa). An interaction with FYN SH3 domain region spans residues 67–92; sequence ETAPGVHKRFFRKVKNLISAFQKPDQ. Lys89 bears the N6-acetyllysine mark. The interval 100-126 is disordered; the sequence is YPVEKSSGRGPQAPTGRRDSDICLNAP.

Interacts with CD84, CD244, LY9, SLAMF1 and FYN. Interacts with NTRK1, NTRK2 and NTRK3. T-cells.

The protein resides in the cytoplasm. Cytoplasmic adapter regulating receptors of the signaling lymphocytic activation molecule (SLAM) family such as SLAMF1, CD244, LY9, CD84, SLAMF6 and SLAMF7. In SLAM signaling seems to cooperate with SH2D1B/EAT-2. Initially it has been proposed that association with SLAMF1 prevents SLAMF1 binding to inhibitory effectors including INPP5D/SHIP1 and PTPN11/SHP-2. However, by simultaneous interactions, recruits FYN which subsequently phosphorylates and activates SLAMF1. Positively regulates CD244/2B4- and CD84-mediated natural killer (NK) cell functions. Can also promote CD48-, SLAMF6 -, LY9-, and SLAMF7-mediated NK cell activation. In the context of NK cell-mediated cytotoxicity enhances conjugate formation with target cells. May also regulate the activity of the neurotrophin receptors NTRK1, NTRK2 and NTRK3. The chain is SH2 domain-containing protein 1A (Sh2d1a) from Mus musculus (Mouse).